Reading from the N-terminus, the 222-residue chain is 26S proteasome non-ATPase regulatory subunit 9 (222 aa).

The PDZ domain occupies 108-194; the sequence is QARDMAEARE…KPLNVMVIRR (87 aa). Ser128 is subject to Phosphoserine.

This sequence belongs to the proteasome subunit p27 family. Interacts with PSMC3. Part of a transient complex (modulator) containing PSMD9, PSMC6 and PSMC3 formed during the assembly of the 26S proteasome.

Its function is as follows. Acts as a chaperone during the assembly of the 26S proteasome, specifically of the base subcomplex of the PA700/19S regulatory complex (RC). During the base subcomplex assembly is part of an intermediate PSMD9:PSMC6:PSMC3 module, also known as modulator trimer complex; PSMD9 is released during the further base assembly process. This chain is 26S proteasome non-ATPase regulatory subunit 9 (Psmd9), found in Rattus norvegicus (Rat).